The sequence spans 230 residues: Modulator of macroautophagy TMEM150B (230 aa).

Residue M1 is a topological domain, cytoplasmic. The helical transmembrane segment at 2 to 22 (WAWALLPICLTIWATAGIWIV) threads the bilayer. Topologically, residues 23–50 (YGMSVSNGSVNLTDGFPFISLCGTYPPQ) are extracellular. 2 N-linked (GlcNAc...) asparagine glycosylation sites follow: N29 and N33. A helical membrane pass occupies residues 51–71 (SCVFGQVLNVGAMLGVWISVI). Over 72–83 (RFQQIRDYGCHS) the chain is Cytoplasmic. The helical transmembrane segment at 84-104 (VLNSVSLAMGLLCALGTSIVG) threads the bilayer. The Extracellular segment spans residues 105 to 115 (NFQQSNQLETH). A helical transmembrane segment spans residues 116 to 136 (LAGAFLAFVIGNIYFWMQTVL). At 137 to 150 (TYMVKPKHGGCYIG) the chain is on the cytoplasmic side. The chain crosses the membrane as a helical span at residues 151–171 (PIRFCLSVACTALIVLMAVFL). The Extracellular segment spans residues 172–183 (KLNMKSISAICE). The chain crosses the membrane as a helical span at residues 184–204 (WIVAMILFLLYGLFSVDFWHL). The Cytoplasmic segment spans residues 205 to 230 (DGHYFHVKKRTAIPNEVEVSTVTLNI).

It belongs to the DRAM/TMEM150 family.

The protein resides in the cell membrane. It localises to the endosome membrane. Its subcellular location is the cytoplasmic vesicle. The protein localises to the autophagosome membrane. In terms of biological role, modulator of macroautophagy that causes accumulation of autophagosomes under basal conditions and enhances autophagic flux. Represses cell death and promotes long-term clonogenic survival of cells grown in the absence of glucose in a macroautophagy-independent manner. May have some role in extracellular matrix engulfment or growth factor receptor recycling, both of which can modulate cell survival. The polypeptide is Modulator of macroautophagy TMEM150B (Xenopus tropicalis (Western clawed frog)).